Reading from the N-terminus, the 190-residue chain is Probable nicotinate-nucleotide adenylyltransferase (190 aa).

Belongs to the NadD family.

The enzyme catalyses nicotinate beta-D-ribonucleotide + ATP + H(+) = deamido-NAD(+) + diphosphate. It functions in the pathway cofactor biosynthesis; NAD(+) biosynthesis; deamido-NAD(+) from nicotinate D-ribonucleotide: step 1/1. Its function is as follows. Catalyzes the reversible adenylation of nicotinate mononucleotide (NaMN) to nicotinic acid adenine dinucleotide (NaAD). This is Probable nicotinate-nucleotide adenylyltransferase from Azobacteroides pseudotrichonymphae genomovar. CFP2.